Here is a 180-residue protein sequence, read N- to C-terminus: Adenine phosphoribosyltransferase (180 aa).

Belongs to the purine/pyrimidine phosphoribosyltransferase family. Homodimer.

The protein resides in the cytoplasm. The enzyme catalyses AMP + diphosphate = 5-phospho-alpha-D-ribose 1-diphosphate + adenine. It functions in the pathway purine metabolism; AMP biosynthesis via salvage pathway; AMP from adenine: step 1/1. Catalyzes a salvage reaction resulting in the formation of AMP, that is energically less costly than de novo synthesis. The protein is Adenine phosphoribosyltransferase of Marinomonas sp. (strain MWYL1).